The sequence spans 372 residues: Ligninase LG3 (372 aa).

A signal peptide spans 1–21 (MAFKQLFAAISLALSLSAANA). Positions 22–28 (AAVIEKR) are excised as a propeptide. 2 cysteine pairs are disulfide-bonded: Cys31/Cys43 and Cys62/Cys148. His75 functions as the Proton acceptor in the catalytic mechanism. Ca(2+) is bound by residues Asp76, Gly94, Asp96, and Ser98. His204 provides a ligand contact to heme b. Ca(2+) is bound by residues Ser205, Asp222, Thr224, Ile227, and Asp229. Residues Cys277 and Cys345 are joined by a disulfide bond. The N-linked (GlcNAc...) asparagine glycan is linked to Asn285. Residues 350–361 (FPTLTTLPGPET) are compositionally biased toward low complexity. A disordered region spans residues 350-372 (FPTLTTLPGPETSVQRIPPPPGA).

This sequence belongs to the peroxidase family. Ligninase subfamily. Heme b is required as a cofactor. Ca(2+) serves as cofactor.

The enzyme catalyses 1-(3,4-dimethoxyphenyl)-2-(2-methoxyphenoxy)propane-1,3-diol + H2O2 = 3,4-dimethoxybenzaldehyde + guaiacol + glycolaldehyde + H2O. It carries out the reaction 2 (3,4-dimethoxyphenyl)methanol + H2O2 = 2 (3,4-dimethoxyphenyl)methanol radical + 2 H2O. Its pathway is secondary metabolite metabolism; lignin degradation. Its function is as follows. Depolymerization of lignin. Catalyzes the C(alpha)-C(beta) cleavage of the propyl side chains of lignin. The protein is Ligninase LG3 (GLG3) of Phanerodontia chrysosporium (White-rot fungus).